Consider the following 381-residue polypeptide: tRNA-specific 2-thiouridylase MnmA (381 aa).

ATP is bound by residues 26–33 and leucine 52; that span reads AMSGGVDS. Cysteine 120 serves as the catalytic Nucleophile. The cysteines at positions 120 and 217 are disulfide-linked. Glycine 144 is a binding site for ATP. The segment at 166-168 is interaction with tRNA; sequence RDQ. The Cysteine persulfide intermediate role is filled by cysteine 217.

It belongs to the MnmA/TRMU family.

It localises to the cytoplasm. The catalysed reaction is S-sulfanyl-L-cysteinyl-[protein] + uridine(34) in tRNA + AH2 + ATP = 2-thiouridine(34) in tRNA + L-cysteinyl-[protein] + A + AMP + diphosphate + H(+). In terms of biological role, catalyzes the 2-thiolation of uridine at the wobble position (U34) of tRNA, leading to the formation of s(2)U34. This Ruegeria sp. (strain TM1040) (Silicibacter sp.) protein is tRNA-specific 2-thiouridylase MnmA.